Here is a 435-residue protein sequence, read N- to C-terminus: Adenylosuccinate synthetase (435 aa).

GTP-binding positions include 17–23 (GDEGKGK) and 45–47 (GHT). Asp18 (proton acceptor) is an active-site residue. Positions 18 and 45 each coordinate Mg(2+). Residues 18-21 (DEGK), 43-46 (NAGH), Thr134, Arg148, Gln229, Thr244, and Arg308 each bind IMP. His46 functions as the Proton donor in the catalytic mechanism. 304-310 (SVTGRPR) is a substrate binding site. Residues Arg310, 336–338 (KLD), and 418–420 (STG) each bind GTP.

The protein belongs to the adenylosuccinate synthetase family. In terms of assembly, homodimer. Mg(2+) serves as cofactor.

Its subcellular location is the cytoplasm. The catalysed reaction is IMP + L-aspartate + GTP = N(6)-(1,2-dicarboxyethyl)-AMP + GDP + phosphate + 2 H(+). Its pathway is purine metabolism; AMP biosynthesis via de novo pathway; AMP from IMP: step 1/2. Plays an important role in the de novo pathway of purine nucleotide biosynthesis. Catalyzes the first committed step in the biosynthesis of AMP from IMP. The sequence is that of Adenylosuccinate synthetase from Bordetella parapertussis (strain 12822 / ATCC BAA-587 / NCTC 13253).